The chain runs to 1203 residues: Protein patched homolog 2 (1203 aa).

Residues 1-57 (MTRSPPLRELPPSYTPPARTAAPQILAGSLKAPLWLRAYFQGLLFSLGCGIQRHCGK) are Cytoplasmic-facing. The helical transmembrane segment at 58-78 (VLFLGLLAFGALALGLRMAII) threads the bilayer. Topologically, residues 79–392 (ETNLEQLWVE…LDDILHAFSE (314 aa)) are extracellular. N370 is a glycosylation site (N-linked (GlcNAc...) asparagine). The helical transmembrane segment at 393–413 (VSAARVVGGYLLMLAYACVTM) threads the bilayer. The SSD domain occupies 394–552 (SAARVVGGYL…MLVFPAILSL (159 aa)). The Cytoplasmic portion of the chain corresponds to 414-428 (LRWDCAQSQGSVGLA). Residues 429–449 (GVLLVALAVASGLGLCALLGI) form a helical membrane-spanning segment. The Extracellular portion of the chain corresponds to 450–457 (TFNAATTQ). Residues 458–478 (VLPFLALGIGVDDVFLLAHAF) traverse the membrane as a helical segment. Residues 479–501 (TEALPGTPLQERMGECLQRTGTS) lie on the Cytoplasmic side of the membrane. The helical transmembrane segment at 502–522 (VVLTSINNMAAFLMAALVPIP) threads the bilayer. The Extracellular segment spans residues 523 to 531 (ALRAFSLQA). A helical membrane pass occupies residues 532–552 (AIVVGCTFVAVMLVFPAILSL). The Cytoplasmic segment spans residues 553–686 (DLRRRHCQRL…APLLLQSHAK (134 aa)). The chain crosses the membrane as a helical span at residues 687 to 707 (AIVLVLFGALLGLSLYGATLV). Over 708-963 (QDGLALTDVV…WEQYLGLRRC (256 aa)) the chain is Extracellular. The N-linked (GlcNAc...) asparagine glycan is linked to N812. A helical transmembrane segment spans residues 964 to 984 (FLLAVCILLVCTFLVCALLLL). Over 985–991 (NPWTAGL) the chain is Cytoplasmic. Residues 992–1012 (IVLVLAMMTVELFGIMGFLGI) traverse the membrane as a helical segment. A topological domain (extracellular) is located at residue K1013. The chain crosses the membrane as a helical span at residues 1014–1034 (LSAIPVVILVASVGIGVEFTV). Topologically, residues 1035-1064 (HVALGFLTTQGSRNLRAAHALEHTFAPVTD) are cytoplasmic. A helical transmembrane segment spans residues 1065–1085 (GAISTLLGLLMLAGSHFDFIV). The Extracellular segment spans residues 1086–1093 (RYFFAALT). The helical transmembrane segment at 1094–1114 (VLTLLGLLHGLVLLPVLLSIL) threads the bilayer. Residues 1115–1203 (GPPPEVIQMY…SSRGPGPATG (89 aa)) lie on the Cytoplasmic side of the membrane. The interval 1171-1203 (GAYIHPAPDEPPWSPAATSSGNLSSRGPGPATG) is disordered. Over residues 1186 to 1195 (AATSSGNLSS) the composition is skewed to polar residues.

Belongs to the patched family.

Its subcellular location is the membrane. Plays a role in the control of cellular growth. May have a role in epidermal development. May act as a receptor for Sonic hedgehog (SHH). In Homo sapiens (Human), this protein is Protein patched homolog 2 (PTCH2).